The chain runs to 393 residues: Homoserine O-succinyltransferase (393 aa).

The AB hydrolase-1 domain occupies 62–372 (NAVLVCHALN…PHGHDAFLLD (311 aa)). Residue Ser168 is the Nucleophile of the active site. Arg238 contributes to the substrate binding site. Active-site residues include Asp333 and His366. Position 367 (Asp367) interacts with substrate.

The protein belongs to the AB hydrolase superfamily. MetX family. Homodimer.

Its subcellular location is the cytoplasm. The catalysed reaction is L-homoserine + succinyl-CoA = O-succinyl-L-homoserine + CoA. The protein operates within amino-acid biosynthesis; L-methionine biosynthesis via de novo pathway; O-succinyl-L-homoserine from L-homoserine: step 1/1. Transfers a succinyl group from succinyl-CoA to L-homoserine, forming succinyl-L-homoserine. The protein is Homoserine O-succinyltransferase of Cupriavidus taiwanensis (strain DSM 17343 / BCRC 17206 / CCUG 44338 / CIP 107171 / LMG 19424 / R1) (Ralstonia taiwanensis (strain LMG 19424)).